Consider the following 235-residue polypeptide: Thiamine import ATP-binding protein ThiQ (235 aa).

Positions 2-230 constitute an ABC transporter domain; sequence LKLIDITWLY…QASASALLGI (229 aa). 32–39 lines the ATP pocket; the sequence is GPSGAGKS.

Belongs to the ABC transporter superfamily. Thiamine importer (TC 3.A.1.19.1) family. The complex is composed of two ATP-binding proteins (ThiQ), two transmembrane proteins (ThiP) and a solute-binding protein (ThiB).

It localises to the cell inner membrane. It catalyses the reaction thiamine(out) + ATP + H2O = thiamine(in) + ADP + phosphate + H(+). Its function is as follows. Part of the ABC transporter complex ThiBPQ involved in thiamine import. Responsible for energy coupling to the transport system. Is also involved in thiamine pyrophosphate (TPP) transport. The polypeptide is Thiamine import ATP-binding protein ThiQ (Salmonella typhimurium (strain LT2 / SGSC1412 / ATCC 700720)).